Consider the following 532-residue polypeptide: MELSYATTLHHRDVVFYVTADRNRAYFVCGGSVYSVGRPRDSQPGEIAKFGLVVRGTGPKDRMVANYVRSELRQRGLRDVRPVGEDEVFLDSVCLLNPNVSSERDVINTNDVEVLDECLAEYCTSLRTSPGVLVTGVRVRARDRVIELFEHPAIVNISSRFAYTPSPYVFALAQAHLPRLPSSLEPLVSGLFDGIPAPRQPLDARDRRTDVVITGTRAPRPMAGTGAGGAGAKRATVSEFVQVKHIDRVVSPSVSSAPPPSAPDASLPPPGLQEAAPPGPPLRELWWVFYAGDRALEEPHAESGLTREEVRAVHGFREQAWKLFGSVGAPRAFLGAALALSPTQKLAVYYYLIHRERRMSPFPALVRLVGRYIQRHGLYVPAPDEPTLADAMNGLFRDALAAGTVAEQLLMFDLLPPKDVPVGSDARADSAALLRFVDSQRLTPGGSVSPEHVMYLGAFLGVLYAGHGRLAAATHTARLTGVTSLVLTVGDVDRMSAFDRGPAGAAGRTRTAGYLDALLTVCLARAQHGQSV.

The tract at residues 251-276 (SPSVSSAPPPSAPDASLPPPGLQEAA) is disordered. The span at 257–276 (APPPSAPDASLPPPGLQEAA) shows a compositional bias: pro residues.

The protein belongs to the alphaherpesvirinae UL21 protein family. As to quaternary structure, interacts (via C-terminus) with UL16.

The protein localises to the virion tegument. It localises to the host cytoplasm. It is found in the host nucleus. In terms of biological role, may participate in DNA packaging/capsid maturation events. Promotes efficient incorporation of tegument proteins UL46, UL49, and US3 into virions. May also play a role in capsid transport to the trans-Golgi network (TGN). The chain is Tegument protein UL21 from Human herpesvirus 2 (strain HG52) (HHV-2).